The chain runs to 105 residues: Large ribosomal subunit protein uL24 (105 aa).

Belongs to the universal ribosomal protein uL24 family. As to quaternary structure, part of the 50S ribosomal subunit.

One of two assembly initiator proteins, it binds directly to the 5'-end of the 23S rRNA, where it nucleates assembly of the 50S subunit. Its function is as follows. One of the proteins that surrounds the polypeptide exit tunnel on the outside of the subunit. This Dictyoglomus turgidum (strain DSM 6724 / Z-1310) protein is Large ribosomal subunit protein uL24.